Reading from the N-terminus, the 159-residue chain is Protein US8.5 (159 aa).

Residues 27–107 (SSQPLDPEGP…APSPHPRPPG (81 aa)) are disordered. Residues 80 to 91 (SDERGPPRHDRP) are compositionally biased toward basic and acidic residues.

The protein belongs to the HHV-1 US8.5 protein family. Phosphorylated.

Its subcellular location is the host nucleus. The protein localises to the host nucleolus. This Human herpesvirus 1 (strain 17) (HHV-1) protein is Protein US8.5.